Reading from the N-terminus, the 58-residue chain is Metallothionein-1 (58 aa).

A beta region spans residues 1-28; it reads PGPCCKDKCECAEGGCKTGCKCTSCRCA. A divalent metal cation-binding residues include Cys-4, Cys-5, Cys-9, Cys-11, Cys-16, Cys-20, Cys-22, Cys-25, Cys-27, Cys-30, Cys-33, Cys-37, Cys-39, Cys-45, Cys-49, Cys-53, Cys-55, and Cys-56. The tract at residues 29–58 is alpha; sequence PCEKCTSGCKCPSKDECAKTCSKPCSCCXX.

This sequence belongs to the metallothionein superfamily. Type 3 family.

Functionally, metallothioneins have a high content of cysteine residues that bind various heavy metals. The different forms of lobster metallothioneins may have different biological functions. Class I MTS in marine crustacea are involved in the sequestration of elevated levels of heavy-metal ions. Binds 6 metal ions. Known to bind cadmium. In Homarus americanus (American lobster), this protein is Metallothionein-1.